The chain runs to 342 residues: Cell division protein ZipA (342 aa).

Residues 1–6 (MEDLQL) lie on the Periplasmic side of the membrane. The helical transmembrane segment at 7 to 27 (VLFILGAIAIVAVLVHGFWSI) threads the bilayer. Topologically, residues 28–342 (RRQQPKSLKD…DYLHRIRANA (315 aa)) are cytoplasmic. Positions 33–57 (KSLKDSPMGNFYKQQADKESPPKRV) are disordered. Positions 47-57 (QADKESPPKRV) are enriched in basic and acidic residues.

It belongs to the ZipA family. As to quaternary structure, interacts with FtsZ via their C-terminal domains.

The protein resides in the cell inner membrane. Its function is as follows. Essential cell division protein that stabilizes the FtsZ protofilaments by cross-linking them and that serves as a cytoplasmic membrane anchor for the Z ring. Also required for the recruitment to the septal ring of downstream cell division proteins. The sequence is that of Cell division protein ZipA from Shewanella sp. (strain W3-18-1).